The chain runs to 425 residues: MLSIKWIRENQELFDEKLSKRFIEPMSSKIAMLDGEKRKITSLIQEFQHARKVKSKILGNMASKSGEEFEAIQRDVKHINEKLEELEQDLNNNNELNELLNMLPNIPDEEVPYGMDESMNKLVRTYGETNPNALNKQHFELGTKLNLMDFEQTAKISGARFVTLKGDLAKLERALINFMIDVHTKEFNFFEMSPPVLVRDNAMYNSGQLPKFAEESFATTNGYRLIPTAEVFLVNIVADTIIPREKLPMRYVAYTPCFRSEAGSSGRDTRGMIRLHQFGKVELVSITTPEESKHEHEYITNSSETILQKLNLPYRVMLLCTGDMGFAAKKTYDIEVWLPGQKQYREIASCSNCGDFQARRMKARYKEFGSNETTLVHTLNASGLPIGRTMVAILENYQNEDGSITIPDVLINYMGGLQKITTHGE.

228–230 (TAE) contacts L-serine. Residue 259 to 261 (RSE) coordinates ATP. Glu-282 is a binding site for L-serine. 346 to 349 (EIAS) provides a ligand contact to ATP. Position 382 (Ser-382) interacts with L-serine.

It belongs to the class-II aminoacyl-tRNA synthetase family. Type-1 seryl-tRNA synthetase subfamily. In terms of assembly, homodimer. The tRNA molecule binds across the dimer.

The protein resides in the cytoplasm. The enzyme catalyses tRNA(Ser) + L-serine + ATP = L-seryl-tRNA(Ser) + AMP + diphosphate + H(+). The catalysed reaction is tRNA(Sec) + L-serine + ATP = L-seryl-tRNA(Sec) + AMP + diphosphate + H(+). It participates in aminoacyl-tRNA biosynthesis; selenocysteinyl-tRNA(Sec) biosynthesis; L-seryl-tRNA(Sec) from L-serine and tRNA(Sec): step 1/1. Its function is as follows. Catalyzes the attachment of serine to tRNA(Ser). Is also able to aminoacylate tRNA(Sec) with serine, to form the misacylated tRNA L-seryl-tRNA(Sec), which will be further converted into selenocysteinyl-tRNA(Sec). This is Serine--tRNA ligase from Rickettsia akari (strain Hartford).